The chain runs to 443 residues: MTTRQPIYKSLYFQVIVAIVIGILLGHFYPETGVALKPLGDGFIKLIKMVIAPIIFCTVVSGIAGMQSMKSVGKTGGYALLYFEIVSTVALLIGLIVVNVVQPGAGMHIDVATLDASKVAAYVTAGKDQSIVGFILNVIPNTIVGAFANGDILQVLMFSVIFGFALHRLGAYGKPVLDFIDRFAHVMFNIINMIMKLAPIGALGAMAFTIGAYGVGSLVQLGQLMICFYITCLLFVLVVLGGICRAHGFSVIKLIRYIREELLIVLGTSSSESALPRMLIKMERLGAKKSVVGLVIPTGYSFNLDGTSIYLTMAAVFIAQATDTHMDITHQITLLLVLLLSSKGAAGVTGSGFIVLAATLSAVGHLPVAGLALILGIDRFMSEARALTNLVGNAVATIVVAKWVKELDTDKLQSELASGGTGISETREIDDLGVAEGPAPVVK.

9 helical membrane passes run 10-30 (SLYF…HFYP), 46-66 (LIKM…IAGM), 78-98 (YALL…LIVV), 143-163 (IVGA…VIFG), 199-219 (PIGA…GSLV), 224-244 (LMIC…GGIC), 291-311 (VVGL…SIYL), 332-352 (ITLL…TGSG), and 354-374 (IVLA…LALI).

This sequence belongs to the dicarboxylate/amino acid:cation symporter (DAACS) (TC 2.A.23) family.

It is found in the cell inner membrane. Functionally, responsible for the transport of dicarboxylates such as succinate, fumarate, and malate from the periplasm across the membrane. The chain is C4-dicarboxylate transport protein from Pseudomonas fluorescens (strain SBW25).